Reading from the N-terminus, the 338-residue chain is Lipoate-protein ligase A (338 aa).

Residues P29–V216 form the BPL/LPL catalytic domain. Residues R71, G76 to F79, and K134 each bind ATP. K134 contacts (R)-lipoate.

Belongs to the LplA family. Monomer.

Its subcellular location is the cytoplasm. It carries out the reaction L-lysyl-[lipoyl-carrier protein] + (R)-lipoate + ATP = N(6)-[(R)-lipoyl]-L-lysyl-[lipoyl-carrier protein] + AMP + diphosphate + H(+). The protein operates within protein modification; protein lipoylation via exogenous pathway; protein N(6)-(lipoyl)lysine from lipoate: step 1/2. Its pathway is protein modification; protein lipoylation via exogenous pathway; protein N(6)-(lipoyl)lysine from lipoate: step 2/2. In terms of biological role, catalyzes both the ATP-dependent activation of exogenously supplied lipoate to lipoyl-AMP and the transfer of the activated lipoyl onto the lipoyl domains of lipoate-dependent enzymes. In Salmonella schwarzengrund (strain CVM19633), this protein is Lipoate-protein ligase A.